The sequence spans 667 residues: tRNA uridine 5-carboxymethylaminomethyl modification enzyme MnmG (667 aa).

13-18 (GGGHAG) provides a ligand contact to FAD. 280–294 (GPRYCPSVEDKINRF) is a binding site for NAD(+).

The protein belongs to the MnmG family. As to quaternary structure, homodimer. Heterotetramer of two MnmE and two MnmG subunits. It depends on FAD as a cofactor.

It is found in the cytoplasm. NAD-binding protein involved in the addition of a carboxymethylaminomethyl (cmnm) group at the wobble position (U34) of certain tRNAs, forming tRNA-cmnm(5)s(2)U34. This Polaromonas naphthalenivorans (strain CJ2) protein is tRNA uridine 5-carboxymethylaminomethyl modification enzyme MnmG.